Here is a 603-residue protein sequence, read N- to C-terminus: Serine protease 56 (603 aa).

Positions 1–19 are cleaved as a signal peptide; it reads MLLAVLLLLPLPSSWFAHG. Positions 64 to 96 are disordered; the sequence is SHECRGSGRPRPQALLQDPPEPGPCGERRPSTA. A glycan (N-linked (GlcNAc...) asparagine) is linked at asparagine 97. In terms of domain architecture, Peptidase S1 spans 105–337; that stretch reads IVGGSAAPPG…FKDWLQEQMS (233 aa). Cysteine 130 and cysteine 146 form a disulfide bridge. Residues histidine 145 and aspartate 191 each act as charge relay system in the active site. 3 cysteine pairs are disulfide-bonded: cysteine 225/cysteine 292, cysteine 256/cysteine 271, and cysteine 282/cysteine 313. The active-site Charge relay system is the serine 286. Disordered stretches follow at residues 442 to 474 and 573 to 603; these read PARELRLHSGSRAAGTRFPKRRPEPRGEANGCP and EGPWMDVGQGPGLERKGHHPLNPQVPPARQP.

The protein belongs to the peptidase S1 family. In terms of tissue distribution, expressed neural retina, cornea, sclera and optic nerve.

Serine protease required during eye development. This Homo sapiens (Human) protein is Serine protease 56 (PRSS56).